A 93-amino-acid chain; its full sequence is C-C motif chemokine 17 (93 aa).

An N-terminal signal peptide occupies residues M1–A23. Intrachain disulfides connect C33–C57 and C34–C73.

Belongs to the intercrine beta (chemokine CC) family.

Its subcellular location is the secreted. Functionally, chemokine, which displays chemotactic activity for T lymphocytes, preferentially Th2 cells, but not monocytes or granulocytes. Therefore plays an important role in a wide range of inflammatory and immunological processes. Acts by binding to CCR4 at T-cell surface. Mediates GM-CSF/CSF2-driven pain and inflammation. In the brain, required to maintain the typical, highly branched morphology of hippocampal microglia under homeostatic conditions. May be important for the appropriate adaptation of microglial morphology and synaptic plasticity to acute lipopolysaccharide (LPS)-induced neuroinflammation. Plays a role in wound healing, mainly by inducing fibroblast migration into the wound. The polypeptide is C-C motif chemokine 17 (Ccl17) (Rattus norvegicus (Rat)).